The sequence spans 88 residues: Small ribosomal subunit protein bS16c (88 aa).

It belongs to the bacterial ribosomal protein bS16 family.

It localises to the plastid. Its subcellular location is the chloroplast. The chain is Small ribosomal subunit protein bS16c from Sinapis alba (White mustard).